A 398-amino-acid polypeptide reads, in one-letter code: tRNA(Ile)-lysidine synthase (398 aa).

25–30 (SGGVDS) lines the ATP pocket.

It belongs to the tRNA(Ile)-lysidine synthase family.

It is found in the cytoplasm. It catalyses the reaction cytidine(34) in tRNA(Ile2) + L-lysine + ATP = lysidine(34) in tRNA(Ile2) + AMP + diphosphate + H(+). Functionally, ligates lysine onto the cytidine present at position 34 of the AUA codon-specific tRNA(Ile) that contains the anticodon CAU, in an ATP-dependent manner. Cytidine is converted to lysidine, thus changing the amino acid specificity of the tRNA from methionine to isoleucine. This chain is tRNA(Ile)-lysidine synthase, found in Francisella tularensis subsp. novicida (strain U112).